The sequence spans 365 residues: tRNA(Met) cytidine acetate ligase (365 aa).

ATP is bound by residues 7-20 (IAEF…HKYL), Gly96, Asn152, and Arg175.

The protein belongs to the TmcAL family.

Its subcellular location is the cytoplasm. It catalyses the reaction cytidine(34) in elongator tRNA(Met) + acetate + ATP = N(4)-acetylcytidine(34) in elongator tRNA(Met) + AMP + diphosphate. In terms of biological role, catalyzes the formation of N(4)-acetylcytidine (ac(4)C) at the wobble position of elongator tRNA(Met), using acetate and ATP as substrates. First activates an acetate ion to form acetyladenylate (Ac-AMP) and then transfers the acetyl group to tRNA to form ac(4)C34. This chain is tRNA(Met) cytidine acetate ligase, found in Streptococcus pneumoniae (strain 70585).